A 417-amino-acid polypeptide reads, in one-letter code: uncharacterized protein (417 aa).

10 helical membrane-spanning segments follow: residues 21 to 41 (ISSLGDWLHILAVLTLAAFQL), 50 to 70 (LLMMSFALPVIVLGPVSGLLA), 88 to 108 (LTVISCVYVSELWQLYVLLSV), 166 to 186 (SVFYINAGAFFLSAVILFFLP), 217 to 237 (MPLLLTGLLTACVVLFVLQIG), 255 to 275 (LAGWCMAVSGAGMLLTAAITG), 283 to 303 (LLYFSAGTLLLGLATGGAPFL), 308 to 328 (IAGITLFIFAFFIMGAAFGLV), 351 to 371 (AIQSATTLASILGMAGGGVLA), and 373 to 393 (WIGVSLAFLVCGCLLIMIGLI).

Belongs to the major facilitator superfamily. TCR/Tet family.

It localises to the cell membrane. This is an uncharacterized protein from Bacillus subtilis (strain 168).